The sequence spans 359 residues: Guanine nucleotide-binding protein-like alpha-11 subunit (359 aa).

Gly-2 is lipidated: N-myristoyl glycine. Residues 29-359 (KLIKILMMGN…YVKKILEDTI (331 aa)) form the G-alpha domain. A G1 motif region spans residues 32–45 (KILMMGNENSAKST). Ser-44 serves as a coordination point for Mg(2+). Residues 176–185 (DIIRCSKNNQ) form a G2 motif region. GTP-binding positions include 178–185 (IRCSKNNQ), 204–208 (DTGNQ), and 281–284 (NKKE). The interval 200-209 (FVFVDTGNQK) is G3 motif. The tract at residues 277-284 (IVLFNKKE) is G4 motif. A G5 motif region spans residues 337–342 (FNSSDT).

The protein belongs to the G-alpha family.

In Dictyostelium discoideum (Social amoeba), this protein is Guanine nucleotide-binding protein-like alpha-11 subunit (gpaK).